Reading from the N-terminus, the 319-residue chain is tRNA uridine(34) hydroxylase (319 aa).

One can recognise a Rhodanese domain in the interval 127-221 (KQEDTVIIDA…YGKDPEVQGE (95 aa)). The active-site Cysteine persulfide intermediate is Cys-181.

The protein belongs to the TrhO family.

The enzyme catalyses uridine(34) in tRNA + AH2 + O2 = 5-hydroxyuridine(34) in tRNA + A + H2O. Functionally, catalyzes oxygen-dependent 5-hydroxyuridine (ho5U) modification at position 34 in tRNAs. The protein is tRNA uridine(34) hydroxylase of Bacillus cereus (strain ZK / E33L).